A 322-amino-acid polypeptide reads, in one-letter code: Protein-L-isoaspartate O-methyltransferase (322 aa).

A disordered region spans residues 1–101; the sequence is MSGERAKRFP…AKQGDRSAAP (101 aa). Residues 14–29 are compositionally biased toward basic and acidic residues; sequence EDLKREPRKPEGRVAE. Low complexity-rich tracts occupy residues 33–51 and 76–91; these read AGDA…PAAA and HAPA…PQGG. The active site involves serine 170.

Belongs to the methyltransferase superfamily. L-isoaspartyl/D-aspartyl protein methyltransferase family.

Its subcellular location is the cytoplasm. The enzyme catalyses [protein]-L-isoaspartate + S-adenosyl-L-methionine = [protein]-L-isoaspartate alpha-methyl ester + S-adenosyl-L-homocysteine. In terms of biological role, catalyzes the methyl esterification of L-isoaspartyl residues in peptides and proteins that result from spontaneous decomposition of normal L-aspartyl and L-asparaginyl residues. It plays a role in the repair and/or degradation of damaged proteins. This is Protein-L-isoaspartate O-methyltransferase from Burkholderia pseudomallei (strain 1106a).